The chain runs to 100 residues: Movement protein TGBp3 (100 aa).

Residues 1–41 are Lumenal-facing; the sequence is MQTAPREYSTSGPTAVLAPTTNTQHYAPYSLYRFLSSHKLD. A helical membrane pass occupies residues 42-59; the sequence is LLLGIALLVFLYVITAAP. The Cytoplasmic portion of the chain corresponds to 60-100; that stretch reads KEVCQVVITGESVVIRNCQQPDRILANLNLSPWNGVKFPLL.

Belongs to the Tymovirales TGBp3 protein family.

It is found in the host endoplasmic reticulum membrane. Plays a role in viral cell-to-cell propagation, by facilitating genome transport to neighboring plant cells through plasmosdesmata. May induce the formation of granular vesicles derived from the Endoplasmic reticulum, which align on actin filaments. The protein is Movement protein TGBp3 of Narcissus mosaic virus (NMV).